The chain runs to 538 residues: Protein phosphatase EYA2 (538 aa).

Polar residues predominate over residues 209–230 (HNVPNQSSESLAGEYNTHNGPS). The disordered stretch occupies residues 209-263 (HNVPNQSSESLAGEYNTHNGPSTPAKEGDTDRPHRASDGKLRGRSKRSSDPSPAG). Residues 234-249 (KEGDTDRPHRASDGKL) show a composition bias toward basic and acidic residues. The Nucleophile role is filled by Asp274. Residues Asp274, Asp276, and Asp502 each contribute to the Mg(2+) site. Catalysis depends on Asp276, which acts as the Proton donor.

This sequence belongs to the HAD-like hydrolase superfamily. EYA family. In terms of assembly, interacts with DACH2 and SIX1, and probably with SIX2, SIX4 and SIX5. Interacts with CAPN8. Interacts with GNAZ and GNAI2; this precludes interaction with SIX1. Mg(2+) serves as cofactor. As to expression, highest expression in muscle with lower levels in kidney, placenta, pancreas, brain and heart.

The protein resides in the cytoplasm. The protein localises to the nucleus. The catalysed reaction is O-phospho-L-tyrosyl-[protein] + H2O = L-tyrosyl-[protein] + phosphate. Its function is as follows. Functions both as protein phosphatase and as transcriptional coactivator for SIX1, and probably also for SIX2, SIX4 and SIX5. Tyrosine phosphatase that dephosphorylates 'Tyr-142' of histone H2AX (H2AXY142ph) and promotes efficient DNA repair via the recruitment of DNA repair complexes containing MDC1. 'Tyr-142' phosphorylation of histone H2AX plays a central role in DNA repair and acts as a mark that distinguishes between apoptotic and repair responses to genotoxic stress. Its function as histone phosphatase may contribute to its function in transcription regulation during organogenesis. Plays an important role in hypaxial muscle development together with SIX1 and DACH2; in this it is functionally redundant with EYA1. The polypeptide is Protein phosphatase EYA2 (EYA2) (Homo sapiens (Human)).